The chain runs to 435 residues: Serine carboxypeptidase-like 14 (435 aa).

Residues 1–23 (MGSWIPKLLLLQLVLLLTKHADS) form the signal peptide. 3 disulfide bridges follow: Cys82–Cys325, Cys246–Cys260, and Cys284–Cys291. Asn103 carries N-linked (GlcNAc...) asparagine glycosylation. Ser178 is a catalytic residue. A glycan (N-linked (GlcNAc...) asparagine) is linked at Asn344. Residue Asp360 is part of the active site. An N-linked (GlcNAc...) asparagine glycan is attached at Asn376. His413 is a catalytic residue.

The protein belongs to the peptidase S10 family. As to expression, expressed in senescent leaves.

The protein resides in the secreted. In terms of biological role, probable carboxypeptidase. The polypeptide is Serine carboxypeptidase-like 14 (SCPL14) (Arabidopsis thaliana (Mouse-ear cress)).